The primary structure comprises 781 residues: MDIFKVLSRGIKAQPKKNQPGAPQLLPSAGAKVNPQFFHDNVGGANAKRGKKRKRKGAQANNATESGDEDDDASDVDYFAPKPTPEELAAKKDAELKADEPKKQKPKLLEENECRQILKSHRLKFTVLAGRVPQDEAATEEKPPKKQKKQKEDRKKQEEEEKKKKKKDEDKKQIYPQPLNSFGELKYTYGIHPVLADNITRQGFRVPTEVQMGSLPLQLRPEMALEKATDVEDVKVEKGIDFLGVAPTGSGKTISFLIPAIDAIIKRRAEDYTPETDEHVLQAIVVAPTRELASQIVNEGRKLAIGTGVRVVLMKRTLRLVAESNEQEETEQEAKEEVQDSDSDSEAESEPEEVMKIDEEEEEEEESDSDAEKKTESRAKGDQKFKKERPITRVDILVTTPKILLNFLCGGEKEKGKPRIIKKTLPTVQSLILDEADVLLDPIFRKQTMGIWRACTHPNLGMTCWSATMASNIEALLTKHIDKRAKRTPEQTPKPLIRLVVGLKDTAVPNITHKLIYTATEPGKLLALRQLLHPVSSADSGPPLRPPFLVFTQTIERAQALHDELKYDIPLEAGGSARVAVLHSSLPDSVRSKIMARFRSGEVWVLITTDVLARGVDFAGVNGVVNYDVPVSAAAYVHRAGRTGRAGREGGVAVTFYTKDDIPFVKSVANVIAMSEKQAGKDIDEKDTVKAAQGSVQKWLLDALPKVAKEDKRKLKVRGVESRRTGGKATITTKSSWERRRENNRREAIEASKRRKREAQKAQKEGGAAPEKAEEEWTGLD.

2 disordered regions span residues 7–108 (LSRG…KPKL) and 134–177 (QDEA…IYPQ). The segment covering 48–57 (KRGKKRKRKG) has biased composition (basic residues). The span at 66–75 (SGDEDDDASD) shows a compositional bias: acidic residues. Basic and acidic residues-rich tracts occupy residues 84 to 108 (TPEE…KPKL) and 139 to 173 (TEEK…DKKQ). Positions 184-212 (ELKYTYGIHPVLADNITRQGFRVPTEVQM) match the Q motif motif. The Helicase ATP-binding domain occupies 233–487 (DVKVEKGIDF…TKHIDKRAKR (255 aa)). 246–253 (APTGSGKT) serves as a coordination point for ATP. The tract at residues 323-386 (ESNEQEETEQ…SRAKGDQKFK (64 aa)) is disordered. Over residues 339-369 (QDSDSDSEAESEPEEVMKIDEEEEEEEESDS) the composition is skewed to acidic residues. Over residues 370 to 386 (DAEKKTESRAKGDQKFK) the composition is skewed to basic and acidic residues. The DEAD box signature appears at 434–437 (DEAD). Positions 527 to 689 (ALRQLLHPVS…GKDIDEKDTV (163 aa)) constitute a Helicase C-terminal domain. The tract at residues 718-781 (RGVESRRTGG…KAEEEWTGLD (64 aa)) is disordered. Positions 736–752 (SWERRRENNRREAIEAS) are enriched in basic and acidic residues.

Belongs to the DEAD box helicase family. DDX52/ROK1 subfamily. Interacts with the U3 snoRNA and is associated with the 90S and 40S pre-ribosomes.

Its subcellular location is the nucleus. It is found in the nucleolus. It catalyses the reaction ATP + H2O = ADP + phosphate + H(+). Functionally, ATP-dependent RNA helicase involved in 40S ribosomal subunit biogenesis. Required for the processing and cleavage of 35S pre-rRNA at sites A0, A1, and A2, leading to mature 18S rRNA. In Neurospora crassa (strain ATCC 24698 / 74-OR23-1A / CBS 708.71 / DSM 1257 / FGSC 987), this protein is ATP-dependent RNA helicase rok1 (drh-16).